We begin with the raw amino-acid sequence, 118 residues long: Small ribosomal subunit protein uS13 (118 aa).

A disordered region spans residues 94–118; that stretch reads SLPLRGQRTKTNARTRKGPRKPIKK.

This sequence belongs to the universal ribosomal protein uS13 family. As to quaternary structure, part of the 30S ribosomal subunit. Forms a loose heterodimer with protein S19. Forms two bridges to the 50S subunit in the 70S ribosome.

In terms of biological role, located at the top of the head of the 30S subunit, it contacts several helices of the 16S rRNA. In the 70S ribosome it contacts the 23S rRNA (bridge B1a) and protein L5 of the 50S subunit (bridge B1b), connecting the 2 subunits; these bridges are implicated in subunit movement. Contacts the tRNAs in the A and P-sites. The chain is Small ribosomal subunit protein uS13 from Shewanella amazonensis (strain ATCC BAA-1098 / SB2B).